The primary structure comprises 510 residues: NAD(P)H-quinone oxidoreductase subunit 2 B, chloroplastic (510 aa).

The next 14 membrane-spanning stretches (helical) occupy residues F31 to T51, W59 to W79, I99 to I119, M124 to C144, L149 to Y169, L184 to L204, I229 to F249, P261 to T281, W295 to I315, M323 to D343, Y354 to L374, A395 to F415, L418 to L438, and M484 to I504.

The protein belongs to the complex I subunit 2 family. As to quaternary structure, NDH is composed of at least 16 different subunits, 5 of which are encoded in the nucleus.

It localises to the plastid. Its subcellular location is the chloroplast thylakoid membrane. The catalysed reaction is a plastoquinone + NADH + (n+1) H(+)(in) = a plastoquinol + NAD(+) + n H(+)(out). It carries out the reaction a plastoquinone + NADPH + (n+1) H(+)(in) = a plastoquinol + NADP(+) + n H(+)(out). Functionally, NDH shuttles electrons from NAD(P)H:plastoquinone, via FMN and iron-sulfur (Fe-S) centers, to quinones in the photosynthetic chain and possibly in a chloroplast respiratory chain. The immediate electron acceptor for the enzyme in this species is believed to be plastoquinone. Couples the redox reaction to proton translocation, and thus conserves the redox energy in a proton gradient. The chain is NAD(P)H-quinone oxidoreductase subunit 2 B, chloroplastic from Hordeum vulgare (Barley).